Here is a 386-residue protein sequence, read N- to C-terminus: Protein RecA (386 aa).

76-83 lines the ATP pocket; the sequence is GPESSGKT. Residues 362–386 are disordered; that stretch reads FDDEDDDFDASTAPAGTFTEVTTEN.

Belongs to the RecA family.

The protein resides in the cytoplasm. Its function is as follows. Can catalyze the hydrolysis of ATP in the presence of single-stranded DNA, the ATP-dependent uptake of single-stranded DNA by duplex DNA, and the ATP-dependent hybridization of homologous single-stranded DNAs. It interacts with LexA causing its activation and leading to its autocatalytic cleavage. This chain is Protein RecA, found in Corynebacterium efficiens (strain DSM 44549 / YS-314 / AJ 12310 / JCM 11189 / NBRC 100395).